Consider the following 232-residue polypeptide: MKKTVVVFSGGQDSTTCLIQALEQYDEVHCITFNYGQRHKEEIEVAQRVSQLLGATAHKVLDVSLLNELAISSLTRDNIPVPDFKQSEQSDIPSTFVPGRNILFLTLAAIYAYQIGAESVITGVCETDFSGYPDCRDEFVKALNHAVNLGIARDIQFITPLMWLDKAQTWALADYYGKLDFVRHNTLTCYNGIQGDGCGQCAACHLRERGLHGYLQDKNAVMDAMKNKVGLK.

8-18 (FSGGQDSTTCL) contacts ATP. Residues Cys-189, Cys-198, Cys-201, and Cys-204 each contribute to the Zn(2+) site.

This sequence belongs to the QueC family. It depends on Zn(2+) as a cofactor.

The enzyme catalyses 7-carboxy-7-deazaguanine + NH4(+) + ATP = 7-cyano-7-deazaguanine + ADP + phosphate + H2O + H(+). Its pathway is purine metabolism; 7-cyano-7-deazaguanine biosynthesis. Catalyzes the ATP-dependent conversion of 7-carboxy-7-deazaguanine (CDG) to 7-cyano-7-deazaguanine (preQ(0)). This chain is 7-cyano-7-deazaguanine synthase, found in Proteus mirabilis (strain HI4320).